A 358-amino-acid polypeptide reads, in one-letter code: 3-isopropylmalate dehydrogenase (358 aa).

Positions 92, 102, 130, and 224 each coordinate substrate. Mg(2+)-binding residues include Asp224, Asp248, and Asp252. Residue 282–294 (GSAPDIAGQGIAN) participates in NAD(+) binding.

The protein belongs to the isocitrate and isopropylmalate dehydrogenases family. LeuB type 1 subfamily. In terms of assembly, homodimer. It depends on Mg(2+) as a cofactor. Requires Mn(2+) as cofactor.

The protein localises to the cytoplasm. It carries out the reaction (2R,3S)-3-isopropylmalate + NAD(+) = 4-methyl-2-oxopentanoate + CO2 + NADH. Its pathway is amino-acid biosynthesis; L-leucine biosynthesis; L-leucine from 3-methyl-2-oxobutanoate: step 3/4. Catalyzes the oxidation of 3-carboxy-2-hydroxy-4-methylpentanoate (3-isopropylmalate) to 3-carboxy-4-methyl-2-oxopentanoate. The product decarboxylates to 4-methyl-2 oxopentanoate. In Bordetella parapertussis (strain 12822 / ATCC BAA-587 / NCTC 13253), this protein is 3-isopropylmalate dehydrogenase.